Consider the following 217-residue polypeptide: Peptide methionine sulfoxide reductase MsrA (217 aa).

The active site involves cysteine 56.

Belongs to the MsrA Met sulfoxide reductase family.

It carries out the reaction L-methionyl-[protein] + [thioredoxin]-disulfide + H2O = L-methionyl-(S)-S-oxide-[protein] + [thioredoxin]-dithiol. The catalysed reaction is [thioredoxin]-disulfide + L-methionine + H2O = L-methionine (S)-S-oxide + [thioredoxin]-dithiol. Functionally, has an important function as a repair enzyme for proteins that have been inactivated by oxidation. Catalyzes the reversible oxidation-reduction of methionine sulfoxide in proteins to methionine. This Corynebacterium glutamicum (strain R) protein is Peptide methionine sulfoxide reductase MsrA.